Here is a 689-residue protein sequence, read N- to C-terminus: PR domain zinc finger protein 8 (689 aa).

An SET domain is found at 16–131; that stretch reads KAVQQCLTDI…KDEELLVWYG (116 aa). Tyr130 serves as a coordination point for S-adenosyl-L-methionine. The segment at 155–183 adopts a C2H2-type 1 zinc-finger fold; the sequence is YTCLECSQRFQFEFPYVAHLRFRCPKRLH. 2 disordered regions span residues 185 to 333 and 397 to 506; these read ADIS…VGGR and SLQE…QPAR. A compositionally biased stretch (gly residues) spans 193–210; sequence QGGGVGTKDHGGGGGGGK. Composition is skewed to low complexity over residues 241-258 and 273-286; these read PESS…AKPS and GGSS…LSSG. A compositionally biased stretch (gly residues) spans 322 to 333; that stretch reads EGGGGAGLVGGR. The span at 423 to 433 shows a compositional bias: low complexity; it reads STPAAASPVGA. Gly residues predominate over residues 472–491; sequence TSGGGGTGAGAAGGAGGGQG. C2H2-type zinc fingers lie at residues 625–648 and 666–688; these read NWCA…RSHH and LKCP…MTSH.

It belongs to the class V-like SAM-binding methyltransferase superfamily. As to quaternary structure, interacts with EPM2A and NHLRC1. This interaction sequesters EPM2A and NHLRC1 to the nucleus. Interacts with BHLHE22. Expressed in brain, heart, skeletal muscle, testes, prostate.

It is found in the nucleus. Its function is as follows. Probable histone methyltransferase, preferentially acting on 'Lys-9' of histone H3. Involved in the control of steroidogenesis through transcriptional repression of steroidogenesis marker genes such as CYP17A1 and LHCGR. Forms with BHLHE22 a transcriptional repressor complex controlling genes involved in neural development and neuronal differentiation. In the retina, it is required for rod bipolar and type 2 OFF-cone bipolar cell survival. This is PR domain zinc finger protein 8 (PRDM8) from Homo sapiens (Human).